Consider the following 327-residue polypeptide: Phenylalanine--tRNA ligase alpha subunit (327 aa).

Glutamate 252 is a Mg(2+) binding site.

Belongs to the class-II aminoacyl-tRNA synthetase family. Phe-tRNA synthetase alpha subunit type 1 subfamily. In terms of assembly, tetramer of two alpha and two beta subunits. Mg(2+) serves as cofactor.

It localises to the cytoplasm. The catalysed reaction is tRNA(Phe) + L-phenylalanine + ATP = L-phenylalanyl-tRNA(Phe) + AMP + diphosphate + H(+). The chain is Phenylalanine--tRNA ligase alpha subunit from Glaesserella parasuis serovar 5 (strain SH0165) (Haemophilus parasuis).